Consider the following 68-residue polypeptide: Translational regulator CsrA 1 (68 aa).

It belongs to the CsrA/RsmA family. In terms of assembly, homodimer; the beta-strands of each monomer intercalate to form a hydrophobic core, while the alpha-helices form wings that extend away from the core.

The protein localises to the cytoplasm. A key translational regulator that binds mRNA to regulate translation initiation and/or mRNA stability. Mediates global changes in gene expression, shifting from rapid growth to stress survival by linking envelope stress, the stringent response and the catabolite repression systems. Usually binds in the 5'-UTR; binding at or near the Shine-Dalgarno sequence prevents ribosome-binding, repressing translation, binding elsewhere in the 5'-UTR can activate translation and/or stabilize the mRNA. Its function is antagonized by small RNA(s). The chain is Translational regulator CsrA 1 from Coxiella burnetii (strain RSA 493 / Nine Mile phase I).